Reading from the N-terminus, the 337-residue chain is Ribose-phosphate pyrophosphokinase 4 (337 aa).

At serine 2 the chain carries N-acetylserine. Mg(2+) contacts are provided by aspartate 158 and histidine 160. Positions glycine 241–threonine 256 are binding of phosphoribosylpyrophosphate.

It belongs to the ribose-phosphate pyrophosphokinase family.

It carries out the reaction D-ribose 5-phosphate + ATP = 5-phospho-alpha-D-ribose 1-diphosphate + AMP + H(+). The polypeptide is Ribose-phosphate pyrophosphokinase 4 (PRS4) (Arabidopsis thaliana (Mouse-ear cress)).